The following is a 468-amino-acid chain: Protein translocase subunit SecY (468 aa).

At Met-1–Pro-20 the chain is on the cytoplasmic side. Residues Lys-21 to Pro-47 traverse the membrane as a helical segment. Residues Val-48–Tyr-58 lie on the Extracellular side of the membrane. An intramembrane region (helical) is located at residues Phe-59 to Leu-66. Residues Phe-59 to Ile-87 traverse the membrane as a discontinuously helical segment. Residues Ala-67–Ile-78 lie within the membrane without spanning it. Residues Gly-79–Ile-87 constitute an intramembrane region (helical). At Leu-88 to Arg-108 the chain is on the cytoplasmic side. A helical transmembrane segment spans residues Phe-109 to Gly-133. Residues Ala-134–Tyr-144 are Extracellular-facing. Residues Thr-145–Ser-169 traverse the membrane as a helical segment. Residues Lys-170–Ser-175 lie on the Cytoplasmic side of the membrane. The chain crosses the membrane as a helical span at residues Gly-176–Leu-194. At Asn-195 to Pro-239 the chain is on the extracellular side. Residues Asp-240–Arg-261 traverse the membrane as a helical segment. At Val-262–Ser-285 the chain is on the cytoplasmic side. Residues Asn-286–Asp-307 form a helical membrane-spanning segment. Residues Arg-308 to Val-346 lie on the Extracellular side of the membrane. A helical transmembrane segment spans residues Arg-347 to Trp-366. The Cytoplasmic segment spans residues Val-367–Val-409. Residues Thr-410–Gly-428 form a helical membrane-spanning segment. Residues Ala-429–Gly-431 lie on the Extracellular side of the membrane. A helical membrane pass occupies residues Thr-432 to Phe-446. Topologically, residues Tyr-447–Gly-468 are cytoplasmic.

It belongs to the SecY/SEC61-alpha family. In terms of assembly, component of the Sec protein translocase complex. Heterotrimer consisting of alpha (SecY), beta (SecG) and gamma (SecE) subunits. The heterotrimers can form oligomers, although 1 heterotrimer is thought to be able to translocate proteins. Interacts with the ribosome. May interact with SecDF, and other proteins may be involved.

The protein localises to the cell membrane. In terms of biological role, the central subunit of the protein translocation channel SecYEG. Consists of two halves formed by TMs 1-5 and 6-10. These two domains form a lateral gate at the front which open onto the bilayer between TMs 2 and 7, and are clamped together by SecE at the back. The channel is closed by both a pore ring composed of hydrophobic SecY resides and a short helix (helix 2A) on the extracellular side of the membrane which forms a plug. The plug probably moves laterally to allow the channel to open. The ring and the pore may move independently. The chain is Protein translocase subunit SecY from Pyrococcus horikoshii (strain ATCC 700860 / DSM 12428 / JCM 9974 / NBRC 100139 / OT-3).